The sequence spans 1165 residues: Error-prone DNA polymerase (1165 aa).

The tract at residues 1111 to 1165 is disordered; sequence SEGLARPPLPTGADLYEPLTYEPLNGDRRDNPDAPAQRLRHPRDVRILPPSRDFH. The segment covering 1152–1165 has biased composition (basic and acidic residues); it reads PRDVRILPPSRDFH.

Belongs to the DNA polymerase type-C family. DnaE2 subfamily.

The protein resides in the cytoplasm. The enzyme catalyses DNA(n) + a 2'-deoxyribonucleoside 5'-triphosphate = DNA(n+1) + diphosphate. Functionally, DNA polymerase involved in damage-induced mutagenesis and translesion synthesis (TLS). It is not the major replicative DNA polymerase. The chain is Error-prone DNA polymerase from Rhodopseudomonas palustris (strain HaA2).